The chain runs to 271 residues: Urease accessory protein UreD (271 aa).

Belongs to the UreD family. UreD, UreF and UreG form a complex that acts as a GTP-hydrolysis-dependent molecular chaperone, activating the urease apoprotein by helping to assemble the nickel containing metallocenter of UreC. The UreE protein probably delivers the nickel.

It localises to the cytoplasm. Functionally, required for maturation of urease via the functional incorporation of the urease nickel metallocenter. In Bacillus sp. (strain TB-90), this protein is Urease accessory protein UreD.